The following is a 329-amino-acid chain: Cathepsin K (329 aa).

The signal sequence occupies residues 1-15 (MWGLTVLLLPVVSFA). Residues 16–114 (LYPEEILDTQ…TLYIPDWEGR (99 aa)) constitute a propeptide, activation peptide. A glycan (N-linked (GlcNAc...) asparagine) is linked at Asn-103. Cystine bridges form between Cys-136–Cys-177, Cys-170–Cys-210, and Cys-269–Cys-318. Residue Cys-139 is part of the active site. Active-site residues include His-276 and Asn-296.

This sequence belongs to the peptidase C1 family.

It is found in the lysosome. Its subcellular location is the secreted. The protein resides in the apical cell membrane. The catalysed reaction is Broad proteolytic activity. With small-molecule substrates and inhibitors, the major determinant of specificity is P2, which is preferably Leu, Met &gt; Phe, and not Arg.. In terms of biological role, thiol protease involved in osteoclastic bone resorption and may participate partially in the disorder of bone remodeling. Displays potent endoprotease activity against fibrinogen at acid pH. May play an important role in extracellular matrix degradation. Involved in the release of thyroid hormone thyroxine (T4) by limited proteolysis of TG/thyroglobulin in the thyroid follicle lumen. This is Cathepsin K (CTSK) from Bos taurus (Bovine).